The following is a 553-amino-acid chain: Serine protease 53 (553 aa).

Positions 1–23 (MKWCWGPVLLIAGATVLMEGLQA) are cleaved as a signal peptide. Peptidase S1 domains are found at residues 24 to 273 (AQRA…ARVQ) and 294 to 526 (VACG…SLDW). Residues 27-46 (ACGQRGPGPPKPQEGNTVPG) form a disordered region. An intrachain disulfide couples Cys-62 to Cys-78. Catalysis depends on charge relay system residues His-77 and Asp-128. 4 disulfide bridges follow: Cys-158–Cys-230, Cys-187–Cys-209, Cys-220–Cys-249, and Cys-326–Cys-342. Active-site charge relay system residues include Ser-224, His-341, and Asp-382. 2 disulfides stabilise this stretch: Cys-444–Cys-464 and Cys-474–Cys-502. The active-site Charge relay system is Ser-478.

It belongs to the peptidase S1 family. In terms of tissue distribution, predominantly detected in testis, liver, heart and ovary, as well as in several tumor cell lines.

Its subcellular location is the secreted. Functionally, in vitro can degrade the fibrinogen alpha chain of as well as pro-urokinase-type plasminogen activator. This Homo sapiens (Human) protein is Serine protease 53 (PRSS53).